The sequence spans 217 residues: Dense granule protein 1 (217 aa).

Residues 1–19 form the signal peptide; the sequence is MARQATFIVALCVCGLAIA. Residues 171–183 are compositionally biased toward polar residues; sequence VASEDSALGNSEE. The segment at 171–217 is disordered; it reads VASEDSALGNSEEQYVEGTVNGSSDPEQERAGGPLIPEGDEQEVDTE. N191 carries an N-linked (GlcNAc...) asparagine glycan. Residues 208–217 show a composition bias toward acidic residues; it reads EGDEQEVDTE.

The protein belongs to the Gra7 family.

The protein localises to the secreted. This chain is Dense granule protein 1 (DG1), found in Neospora caninum (Coccidian parasite).